Consider the following 131-residue polypeptide: Rhodopsin (131 aa).

The Extracellular portion of the chain corresponds to 1 to 16 (CGIDYYTRAPGYNNES). N-linked (GlcNAc...) asparagine glycosylation is present at N14. Residues 17-38 (FVIYMFIVHFLIPLFIISFCYG) traverse the membrane as a helical segment. The Cytoplasmic portion of the chain corresponds to 39-66 (NLLCAVKAAAAAQEESETTQRAEREVTR). The helical transmembrane segment at 67 to 88 (MVIMMVISYLVSWVPYASVAWY) threads the bilayer. Topologically, residues 89 to 100 (IFSNQGSEFGPV) are extracellular. A helical membrane pass occupies residues 101-122 (FMTIPAFFAKSSALYNPLIYVL). N6-(retinylidene)lysine is present on K110. At 123 to 131 (MNKQFRHCM) the chain is on the cytoplasmic side.

Belongs to the G-protein coupled receptor 1 family. Opsin subfamily. In terms of processing, phosphorylated on some or all of the serine and threonine residues present in the C-terminal region. Post-translationally, contains one covalently linked retinal chromophore.

Its subcellular location is the membrane. The protein resides in the cell projection. It is found in the cilium. The protein localises to the photoreceptor outer segment. Photoreceptor required for image-forming vision at low light intensity. While most salt water fish species use retinal as chromophore, most freshwater fish use 3-dehydroretinal, or a mixture of retinal and 3-dehydroretinal. Light-induced isomerization of 11-cis to all-trans retinal triggers a conformational change that activates signaling via G-proteins. Subsequent receptor phosphorylation mediates displacement of the bound G-protein alpha subunit by arrestin and terminates signaling. This is Rhodopsin (rho) from Coregonus autumnalis (Arctic cisco).